The sequence spans 288 residues: Energy-coupling factor transporter ATP-binding protein EcfA2 (288 aa).

Positions 3 to 246 constitute an ABC transporter domain; the sequence is IKLEQLGYCY…PDELVDLGLS (244 aa). Position 40 to 47 (40 to 47) interacts with ATP; the sequence is GHTGSGKS.

This sequence belongs to the ABC transporter superfamily. Energy-coupling factor EcfA family. In terms of assembly, forms a stable energy-coupling factor (ECF) transporter complex composed of 2 membrane-embedded substrate-binding proteins (S component), 2 ATP-binding proteins (A component) and 2 transmembrane proteins (T component).

The protein resides in the cell membrane. In terms of biological role, ATP-binding (A) component of a common energy-coupling factor (ECF) ABC-transporter complex. Unlike classic ABC transporters this ECF transporter provides the energy necessary to transport a number of different substrates. This is Energy-coupling factor transporter ATP-binding protein EcfA2 from Listeria monocytogenes serovar 1/2a (strain ATCC BAA-679 / EGD-e).